A 343-amino-acid chain; its full sequence is Protein RecA (343 aa).

Residue 64–71 (GPESSGKT) participates in ATP binding.

The protein belongs to the RecA family.

It is found in the cytoplasm. Functionally, can catalyze the hydrolysis of ATP in the presence of single-stranded DNA, the ATP-dependent uptake of single-stranded DNA by duplex DNA, and the ATP-dependent hybridization of homologous single-stranded DNAs. It interacts with LexA causing its activation and leading to its autocatalytic cleavage. This is Protein RecA from Bacillus thuringiensis (strain Al Hakam).